Here is a 355-residue protein sequence, read N- to C-terminus: 3-dehydroquinate synthase (355 aa).

Residues 71 to 76 (EGEERK), 105 to 109 (GVVGD), 129 to 130 (TS), Lys-142, and Lys-151 each bind NAD(+). Zn(2+)-binding residues include Glu-184, His-246, and His-263.

The protein belongs to the sugar phosphate cyclases superfamily. Dehydroquinate synthase family. Co(2+) serves as cofactor. Requires Zn(2+) as cofactor. It depends on NAD(+) as a cofactor.

The protein localises to the cytoplasm. It catalyses the reaction 7-phospho-2-dehydro-3-deoxy-D-arabino-heptonate = 3-dehydroquinate + phosphate. Its pathway is metabolic intermediate biosynthesis; chorismate biosynthesis; chorismate from D-erythrose 4-phosphate and phosphoenolpyruvate: step 2/7. In terms of biological role, catalyzes the conversion of 3-deoxy-D-arabino-heptulosonate 7-phosphate (DAHP) to dehydroquinate (DHQ). This is 3-dehydroquinate synthase from Streptococcus pneumoniae (strain JJA).